Consider the following 443-residue polypeptide: Citrate transporter CitP (443 aa).

A run of 13 helical transmembrane segments spans residues 27-47, 59-79, 83-103, 114-134, 151-171, 177-197, 209-229, 268-288, 294-314, 322-342, 350-370, 388-410, and 422-442; these read ISGIGLVRYAFMAVLLIIAIS, IFALVLMGHVFYYLGAHLPIF, LGGGSVFTILLTAILVATNVM, FINGMDFLGLYIVSLIASSLF, VAFISMALTAVVIGIVGVIIG, AILYIAMPIMAGGVGAGIVPL, SAGILSKLFPTVILGNLLAII, YVQLGVGLIIAVMFFMIGTML, GINAYAFIILSIVLTKAFGLL, VIMFGQVIVKNMTHALLAGVG, VLLAALSWQFVVLCLVSIVAI, AAITAGLANNSMGGTGNVAVLAA, and MGNRIGGALILVVAGILVTFM.

This sequence belongs to the 2-hydroxycarboxylate transporter (2-HCT) (TC 2.A.24) family.

Its subcellular location is the cell membrane. The enzyme catalyses (R)-lactate(in) + citrate(out) = (R)-lactate(out) + citrate(in). It carries out the reaction (S)-lactate(in) + citrate(out) = (S)-lactate(out) + citrate(in). The catalysed reaction is citrate(in) + H(+)(in) = citrate(out) + H(+)(out). Uptake of citrate is not affected by the absence or presence of Na(+) up to 25 mM and is increasingly inhibited by increasing Mg(2+) concentrations. Its function is as follows. Secondary transporter involved in citrate metabolism. During cometabolism of citrate and glucose, catalyzes the uptake of divalent citrate into the cell coupled to the exit of monovalent lactate, a product of citrate fermentation during citrate-glucose cometabolism (precursor/product exchange). The citrate/lactate exchange is electrogenic and results in the generation of a membrane potential. In the absence of glucose, i.e. when no lactate is produced, CitP catalyzes the proton-dependent transport of citrate and malate. Transports the divalent form of citrate and malate with the concomitant uptake of one proton, therefore translocating a single unit of negative charge across the membrane. In vitro, transports a range of substrates that contain the 2-hydroxycarboxylate motif, HO-CR(2)-COO(-), with a preference for malate, citrate and monovalent 2-hydroxyisobutyrate. Modification of the OH or the COO(-) groups of the 2-hydroxycarboxylate motif drastically reduces the affinity of the transporter for the substrates, indicating their relevance in substrate recognition. Significant activity is also observed with some 2-oxocarboxylates and a 3-hydroxycarboxylate. The chain is Citrate transporter CitP from Leuconostoc mesenteroides subsp. mesenteroides.